We begin with the raw amino-acid sequence, 219 residues long: 7-cyano-7-deazaguanine synthase (219 aa).

10–20 (FSGGQDSTTCL) is a binding site for ATP. Residues Cys188, Cys197, Cys200, and Cys203 each coordinate Zn(2+).

It belongs to the QueC family. As to quaternary structure, homodimer. Zn(2+) is required as a cofactor.

It carries out the reaction 7-carboxy-7-deazaguanine + NH4(+) + ATP = 7-cyano-7-deazaguanine + ADP + phosphate + H2O + H(+). The protein operates within purine metabolism; 7-cyano-7-deazaguanine biosynthesis. Its function is as follows. Catalyzes the ATP-dependent conversion of 7-carboxy-7-deazaguanine (CDG) to 7-cyano-7-deazaguanine (preQ(0)). In Clostridium botulinum (strain Loch Maree / Type A3), this protein is 7-cyano-7-deazaguanine synthase.